Consider the following 294-residue polypeptide: Large ribosomal subunit protein uL2 (294 aa).

2 disordered regions span residues 1–37 and 228–294; these read MGIRTLRPYTPSTRHMTVSDFEELSRDENGKRPRPEK and GSVM…RAAQ. Positions 23–37 are enriched in basic and acidic residues; it reads ELSRDENGKRPRPEK. Basic residues predominate over residues 264-285; that stretch reads KTRKRNKPSNKFIVRGRRRGGR.

It belongs to the universal ribosomal protein uL2 family. Part of the 50S ribosomal subunit. Forms a bridge to the 30S subunit in the 70S ribosome.

Functionally, one of the primary rRNA binding proteins. Required for association of the 30S and 50S subunits to form the 70S ribosome, for tRNA binding and peptide bond formation. It has been suggested to have peptidyltransferase activity; this is somewhat controversial. Makes several contacts with the 16S rRNA in the 70S ribosome. The polypeptide is Large ribosomal subunit protein uL2 (Synechococcus sp. (strain JA-2-3B'a(2-13)) (Cyanobacteria bacterium Yellowstone B-Prime)).